A 1072-amino-acid chain; its full sequence is DNA-directed RNA polymerase subunit beta (1072 aa).

Belongs to the RNA polymerase beta chain family. In plastids the minimal PEP RNA polymerase catalytic core is composed of four subunits: alpha, beta, beta', and beta''. When a (nuclear-encoded) sigma factor is associated with the core the holoenzyme is formed, which can initiate transcription.

The protein localises to the plastid. The protein resides in the chloroplast. The enzyme catalyses RNA(n) + a ribonucleoside 5'-triphosphate = RNA(n+1) + diphosphate. Its function is as follows. DNA-dependent RNA polymerase catalyzes the transcription of DNA into RNA using the four ribonucleoside triphosphates as substrates. The chain is DNA-directed RNA polymerase subunit beta from Arabidopsis thaliana (Mouse-ear cress).